The primary structure comprises 127 residues: Cyclin-dependent protein kinase inhibitor SIM (127 aa).

A disordered region spans residues 21–71 (RANTNRDDDGGGCTTPTSSDHKIPPTTATTPPPPPQKPRPPSTPSSLGIRS). A compositionally biased stretch (pro residues) spans 50-63 (TPPPPPQKPRPPST).

Interacts with CDKA-1. Interacts with CYCD2-1, CYCD3-2 and CYCD4-1. Interacts with CDKB1-1. Interacts with CPR5. Expressed in the shoot apical meristem, leaf primordia and the elongation zone of the root.

It localises to the nucleus. Its function is as follows. Cyclin-dependent protein kinase (CDK) inhibitor that functions as a repressor of mitosis in the endoreduplication cell cycle. Inhibits the kinase activity of CYCD3-1/CDKA-1, CYCD2-1/CDKA-1 and CYCB1-1/CDKB1-1 complexes in a dose dependent manner. Cooperates with SMR1 and SMR2 to promote endoreplication during leaf development. Required for normal trichome endoreplicating cell cycles. Positive regulator of effector-triggered immunity (ETI). The sequence is that of Cyclin-dependent protein kinase inhibitor SIM from Arabidopsis thaliana (Mouse-ear cress).